The following is a 404-amino-acid chain: uncharacterized protein (404 aa).

An N-terminal signal peptide occupies residues 1-21 (MRKLGLALSIMGLLLVSIVAG). An N-acetylcysteine modification is found at Cys22. Residue Cys22 is the site of S-archaeol cysteine attachment.

The protein belongs to the BMP lipoprotein family.

The protein localises to the cell membrane. This is an uncharacterized protein from Pyrococcus abyssi (strain GE5 / Orsay).